Consider the following 399-residue polypeptide: Tryptophan synthase beta chain (399 aa).

Lys-92 carries the N6-(pyridoxal phosphate)lysine modification.

The protein belongs to the TrpB family. As to quaternary structure, tetramer of two alpha and two beta chains. Pyridoxal 5'-phosphate is required as a cofactor.

It catalyses the reaction (1S,2R)-1-C-(indol-3-yl)glycerol 3-phosphate + L-serine = D-glyceraldehyde 3-phosphate + L-tryptophan + H2O. The protein operates within amino-acid biosynthesis; L-tryptophan biosynthesis; L-tryptophan from chorismate: step 5/5. In terms of biological role, the beta subunit is responsible for the synthesis of L-tryptophan from indole and L-serine. The sequence is that of Tryptophan synthase beta chain from Legionella pneumophila (strain Corby).